Reading from the N-terminus, the 1299-residue chain is MARQMTSSQFHKSKTLDNKYMLGDEIGKGAYGRVYIGLDLENGDFVAIKQVSLENIVQEDLNTIMQEIDLLKNLNHKNIVKYLGSLKTKTHLHIILEYVENGSLANIIKPNKFGPFPESLVTVYIAQVLEGLVYLHEQGVIHRDIKGANILTTKEGLVKLADFGVATKLNEADVNTHSVVGTPYWMAPEVIEMSGVCAASDIWSVGCTVIELLTCVPPYYDLQPMPALFRIVQDDSPPIPDSLSPDITDFLRQCFKKDSRQRPDAKTLLSHPWIRNSRRALQSSLRHSGTIRYMKGADSSSEKDGEGSQDIAESVSAEKVGMSKTNSKSKLGVGSFRSEKDQSSASDIGEERADSEDDIMSDQGPTLSIHDNKSSLQSSTCSISSDAKGTSQDGKSEPDGNLEMEASEGRRKASATKQVGKESSIQMQQRSHSFGPKGEDRGLRKAVKTPSSYGGNELTRFSDPPGDACLHDLFHPLNKVPEGKLNEASASTPASNANQGDSPVADGGKNDLATKLRARIAQKQMEGETGHSNDGGDLFRLMMGVLKDDVIDIDGLVFDEKASPDNLLPLQAVEFSRLVSSLRPSETEDAIVTSCQKLVAMFRHRPEQKVVFVTQHGFLPVMDLLDSPKSRVTCAVLQLINEIIKDNIDFQENACLVGLIPLVMSFAGPERDRSREIRKEAAYFLQQLCQSSSLTLQMFIACRGIPVLVGFLEADYAKYRSMVHLAIDGMWQVFKLKRSTPRNDFCRIAAKNGILLRLINTLYSLNEATLLASEGRSGQLDQHEALLSVIDHPDVLKTRPGGGEEPSNSQRSDLYQPDGDRPRSSSAALDATEDVKQHHRISISSNRTSTDKIQKLAESASNGYAVTQPEQVRPLLSLLEKEPPSRHVSGQLDYVKHIAGLEKHESILPLLRASIDTMPRYFSKTMSKKVMAIEGAASASGVLSGSGVLNARLGSDTSSGLLSHMVTTLSAEVASQYLEKVADLLLEFARADTTVKSYMCSQSLLSRLFHMFNRVEPPILLKILKCTNHLSTDPNCLESLQRADAIKHLIPNLEVKEGNLVDQIHHEVLSALFNLCKINKRRQEQAAENGIIPHLMLFVMSDSPLKQYALPLLCDMAHASRNSREQLRSHGGLDVYLSLLDDEYWSVIALDSIAVCLAQDNDNRKVEQALLKDDAIYTLVNFFQSCPERHFVHILEPFLKIITKSSRINTTLAVNGLTPLLIARLDHQDAIARLNLLKLIKAVYEHHPRPKQLIVENDLPQRLQNLIEERREGQHLGGQVLVKQMATSLLKALHINTVL.

The 255-residue stretch at 20 to 274 (YMLGDEIGKG…AKTLLSHPWI (255 aa)) folds into the Protein kinase domain. 2 HEAT repeats span residues 25–62 (EIGK…EDLN) and 86–125 (LKTK…TVYI). Residues 26–34 (IGKGAYGRV) and K49 each bind ATP. The active-site Proton acceptor is D144. The stretch at 218–256 (PYYDLQPMPALFRIVQDDSPPIPDSLSPDITDFLRQCFK) is one HEAT 3 repeat. 2 disordered regions span residues 291-458 (IRYM…GNEL) and 483-509 (GKLN…DGGK). The span at 374 to 385 (SSLQSSTCSISS) shows a compositional bias: low complexity. Polar residues-rich tracts occupy residues 415–432 (ATKQ…QRSH) and 488–501 (ASAS…NQGD). 16 HEAT repeats span residues 532 to 570 (SNDG…LLPL), 611 to 649 (VFVT…DNID), 653 to 694 (NACL…SSSL), 698 to 736 (MFIA…VFKL), 743 to 780 (NDFC…SGQL), 781 to 820 (DQHE…PDGD), 868 to 900 (QPEQ…HIAG), 901 to 939 (LEKH…AASA), 955 to 994 (SDTS…ADTT), 998 to 1036 (YMCS…DPNC), 1043 to 1081 (ADAI…INKR), 1085 to 1122 (QAAE…ASRN), 1125 to 1164 (EQLR…NDNR), 1186 to 1210 (CPER…RINT), 1211 to 1249 (TLAV…HHPR), and 1279 to 1299 (QVLV…NTVL). Positions 795 to 852 (VLKTRPGGGEEPSNSQRSDLYQPDGDRPRSSSAALDATEDVKQHHRISISSNRTSTDK) are disordered.

It belongs to the protein kinase superfamily. Ser/Thr protein kinase family. In terms of processing, autophosphorylated. As to expression, expressed in both the sporophytic and the gametophytic tissues, especially in dividing cells.

It is found in the cytoplasm. Its subcellular location is the cytoskeleton. The protein localises to the microtubule organizing center. The protein resides in the nucleus. It localises to the nucleolus. It is found in the cell membrane. The enzyme catalyses L-seryl-[protein] + ATP = O-phospho-L-seryl-[protein] + ADP + H(+). It catalyses the reaction L-threonyl-[protein] + ATP = O-phospho-L-threonyl-[protein] + ADP + H(+). Its function is as follows. Serine/threonine-protein kinase involved in the spatial and temporal control system organizing cortical activities in mitotic and postmitotic cells. Required for the normal functioning of the plasma membrane in developing pollen. Involved in the regulation of cell expansion and embryo development. This Brassica napus (Rape) protein is MAP3K epsilon protein kinase 1.